Reading from the N-terminus, the 172-residue chain is Large ribosomal subunit protein uL10 (172 aa).

Belongs to the universal ribosomal protein uL10 family. As to quaternary structure, part of the ribosomal stalk of the 50S ribosomal subunit. The N-terminus interacts with L11 and the large rRNA to form the base of the stalk. The C-terminus forms an elongated spine to which L12 dimers bind in a sequential fashion forming a multimeric L10(L12)X complex.

In terms of biological role, forms part of the ribosomal stalk, playing a central role in the interaction of the ribosome with GTP-bound translation factors. In Acidothermus cellulolyticus (strain ATCC 43068 / DSM 8971 / 11B), this protein is Large ribosomal subunit protein uL10.